A 317-amino-acid chain; its full sequence is Neuroguidin-A (317 aa).

2 disordered regions span residues 125–170 and 280–317; these read ENDP…SKVK and SALT…RRRH. The span at 146 to 157 shows a compositional bias: acidic residues; the sequence is DERESDSGEEGA. Residues 297 to 317 are compositionally biased toward basic residues; the sequence is KKSKKGPKKSKKKKGFSRRRH.

This sequence belongs to the SAS10 family. As to quaternary structure, part of the small subunit (SSU) processome, composed of more than 70 proteins and the RNA chaperone small nucleolar RNA (snoRNA) U3.

It localises to the nucleus. The protein resides in the nucleolus. The protein localises to the chromosome. It is found in the centromere. Its subcellular location is the cytoplasm. It localises to the cell projection. The protein resides in the axon. The protein localises to the dendrite. It is found in the filopodium. Functionally, part of the small subunit (SSU) processome, first precursor of the small eukaryotic ribosomal subunit. During the assembly of the SSU processome in the nucleolus, many ribosome biogenesis factors, an RNA chaperone and ribosomal proteins associate with the nascent pre-rRNA and work in concert to generate RNA folding, modifications, rearrangements and cleavage as well as targeted degradation of pre-ribosomal RNA by the RNA exosome. Its dissociation from the complex determines the transition from state pre-A1 to state pre-A1*. May inhibit mRNA translation. This chain is Neuroguidin-A (ngdn-a), found in Xenopus laevis (African clawed frog).